The following is a 128-amino-acid chain: Sulfurtransferase TusD (128 aa).

Residue C78 is the Cysteine persulfide intermediate of the active site.

Belongs to the DsrE/TusD family. Heterohexamer, formed by a dimer of trimers. The hexameric TusBCD complex contains 2 copies each of TusB, TusC and TusD. The TusBCD complex interacts with TusE.

It is found in the cytoplasm. In terms of biological role, part of a sulfur-relay system required for 2-thiolation of 5-methylaminomethyl-2-thiouridine (mnm(5)s(2)U) at tRNA wobble positions. Accepts sulfur from TusA and transfers it in turn to TusE. The sequence is that of Sulfurtransferase TusD from Buchnera aphidicola subsp. Schizaphis graminum (strain Sg).